The following is a 672-amino-acid chain: GPI mannosyltransferase pigv-1 (672 aa).

Topologically, residues Met-1–Arg-134 are cytoplasmic. Basic and acidic residues predominate over residues Arg-82–Ser-94. Residues Arg-82–Glu-115 are disordered. Over residues Gly-97–Thr-107 the composition is skewed to low complexity. The helical transmembrane segment at Gln-135–Gly-155 threads the bilayer. At Asp-156–Thr-239 the chain is on the extracellular side. A helical membrane pass occupies residues Phe-240 to Leu-260. At Cys-261–Lys-277 the chain is on the cytoplasmic side. 2 consecutive transmembrane segments (helical) span residues Ile-278–Ala-298 and Tyr-299–Leu-319. The Extracellular segment spans residues Arg-320–Arg-345. The helical transmembrane segment at Ser-346–Asp-366 threads the bilayer. Residues Glu-367 to Thr-423 lie on the Cytoplasmic side of the membrane. A helical membrane pass occupies residues Leu-424–Phe-444. Residues Met-445–Lys-520 are Extracellular-facing. Residues Ile-521–Ile-541 form a helical membrane-spanning segment. At Lys-542–Pro-569 the chain is on the cytoplasmic side. Residues Met-570–Phe-590 traverse the membrane as a helical segment. Over Thr-591–Arg-592 the chain is Extracellular. Residues Ile-593 to Thr-613 form a helical membrane-spanning segment. The Cytoplasmic segment spans residues Gln-614–Lys-648. A helical transmembrane segment spans residues Leu-649–Leu-669. Residues Pro-670–Thr-672 are Extracellular-facing.

Belongs to the PIGV family. Expressed in epithelial tissues including the epidermis, pharynx, intestine, rectum and excretory cell during embryogenesis.

The protein localises to the endoplasmic reticulum membrane. Its pathway is glycolipid biosynthesis; glycosylphosphatidylinositol-anchor biosynthesis. In terms of biological role, alpha-1,6-mannosyltransferase involved in glycosylphosphatidylinositol-anchor biosynthesis. Transfers the second mannose to the glycosylphosphatidylinositol during GPI precursor assembly. Required for maintenance of epithelial integrity during embryogenesis. The protein is GPI mannosyltransferase pigv-1 of Caenorhabditis elegans.